The chain runs to 786 residues: Endonuclease MutS2 (786 aa).

An ATP-binding site is contributed by 335–342; sequence GPNTGGKT. The Smr domain occupies 711-786; the sequence is LDLRGERFEN…GLGVTVVELK (76 aa).

Belongs to the DNA mismatch repair MutS family. MutS2 subfamily. As to quaternary structure, homodimer. Binds to stalled ribosomes, contacting rRNA.

Functionally, endonuclease that is involved in the suppression of homologous recombination and thus may have a key role in the control of bacterial genetic diversity. Its function is as follows. Acts as a ribosome collision sensor, splitting the ribosome into its 2 subunits. Detects stalled/collided 70S ribosomes which it binds and splits by an ATP-hydrolysis driven conformational change. Acts upstream of the ribosome quality control system (RQC), a ribosome-associated complex that mediates the extraction of incompletely synthesized nascent chains from stalled ribosomes and their subsequent degradation. Probably generates substrates for RQC. This Bacillus cereus (strain AH820) protein is Endonuclease MutS2.